Reading from the N-terminus, the 614-residue chain is Sodium- and chloride-dependent betaine transporter (614 aa).

Residues 1-44 (MDGKVAVQECGPPAVSWVPEEGEKLDQEDEDQVKDRGQWTNKME) lie on the Cytoplasmic side of the membrane. A run of 3 helical transmembrane segments spans residues 45-65 (FVLS…FPYL), 73-92 (AFFI…VFFL), and 117-137 (GIGL…IIIL). Over 138-210 (AWALFYLFSS…SGIHDLGSLR (73 aa)) the chain is Extracellular. A disulfide bridge links Cys157 with Cys166. Asn171 and Asn183 each carry an N-linked (GlcNAc...) asparagine glycan. 9 helical membrane passes run 211–229 (WELA…FCIW), 238–255 (VVYF…ILLI), 291–308 (IFFS…LGSY), 320–341 (IALC…FSIL), 374–393 (MPLS…FLGL), 423–441 (LLIL…FLVT), 458–478 (GICL…VYGA), 499–518 (ISWL…FSLS), and 538–556 (IGWF…FVVI). Residues 557 to 614 (TLLKTRGPFRKRLRQLITPDSSLPQPKQHPCLDGSAGRNFGPSPTREGLIAGEKETHL) lie on the Cytoplasmic side of the membrane. Residues 576-614 (DSSLPQPKQHPCLDGSAGRNFGPSPTREGLIAGEKETHL) are disordered.

This sequence belongs to the sodium:neurotransmitter symporter (SNF) (TC 2.A.22) family. SLC6A12 subfamily. Interacts with LIN7C. As to expression, expressed in kidney, liver, heart, skeletal muscle, placenta, and a widespread distribution in the brain.

The protein localises to the basolateral cell membrane. It localises to the cell membrane. The catalysed reaction is 4-aminobutanoate(out) + chloride(out) + 3 Na(+)(out) = 4-aminobutanoate(in) + chloride(in) + 3 Na(+)(in). The enzyme catalyses glycine betaine(out) + 2 chloride(out) + 3 Na(+)(out) = glycine betaine(in) + 2 chloride(in) + 3 Na(+)(in). Functionally, transporter that mediates cellular uptake of betaine and GABA in a sodium- and chloride-dependent process. May have a role in regulation of GABAergic transmission in the brain through the reuptake of GABA into presynaptic terminals, as well as in osmotic regulation. Probably also involved in renal and hepatic osmotic regulation. The polypeptide is Sodium- and chloride-dependent betaine transporter (Homo sapiens (Human)).